The sequence spans 215 residues: Putative lipoprotein NMB1124/NMB1162 (215 aa).

Residues 1-16 (MKPLILGLAAVLALSA) form the signal peptide. Residue Cys-17 is the site of N-palmitoyl cysteine attachment. Cys-17 carries S-diacylglycerol cysteine lipidation.

It is found in the cell membrane. The sequence is that of Putative lipoprotein NMB1124/NMB1162 from Neisseria meningitidis serogroup B (strain ATCC BAA-335 / MC58).